Here is a 122-residue protein sequence, read N- to C-terminus: Large ribosomal subunit protein uL14 (122 aa).

This sequence belongs to the universal ribosomal protein uL14 family. In terms of assembly, part of the 50S ribosomal subunit. Forms a cluster with proteins L3 and L19. In the 70S ribosome, L14 and L19 interact and together make contacts with the 16S rRNA in bridges B5 and B8.

In terms of biological role, binds to 23S rRNA. Forms part of two intersubunit bridges in the 70S ribosome. This Borrelia recurrentis (strain A1) protein is Large ribosomal subunit protein uL14.